Consider the following 435-residue polypeptide: Citrate synthase (435 aa).

Residues H311 and D370 contribute to the active site.

Belongs to the citrate synthase family. Homohexamer.

The enzyme catalyses oxaloacetate + acetyl-CoA + H2O = citrate + CoA + H(+). Its pathway is carbohydrate metabolism; tricarboxylic acid cycle; isocitrate from oxaloacetate: step 1/2. The chain is Citrate synthase (gltA) from Rickettsia africae (strain ESF-5).